The primary structure comprises 435 residues: UDP-glucuronic acid decarboxylase 1 (435 aa).

Residues 1–33 form a disordered region; the sequence is MKQLHKQMSSKRDEETIPMSQSSPYSPKTLKHP. The Cytoplasmic portion of the chain corresponds to 1 to 48; sequence MKQLHKQMSSKRDEETIPMSQSSPYSPKTLKHPRSLPRSLHYLFREQR. A helical; Signal-anchor for type II membrane protein membrane pass occupies residues 49-69; that stretch reads LLFILVGILIGSTFFILQPSL. Residues 70 to 435 lie on the Lumenal side of the membrane; the sequence is SRLGAAESTS…ILNEDEGKGL (366 aa). Over residues 91 to 100 the composition is skewed to polar residues; sequence DSPPSRSTFN. The interval 91 to 110 is disordered; the sequence is DSPPSRSTFNSGGGGGRTGR. Gly129, Phe130, Val131, Asp150, Asn151, Phe153, Thr154, Gly155, Asp175, and Val176 together coordinate NAD(+). Residue Ile180 participates in UDP-alpha-D-glucuronate binding. Residue Leu190 participates in NAD(+) binding. UDP-alpha-D-glucuronate is bound at residue Lys208. Position 209 (Thr209) interacts with NAD(+). UDP-alpha-D-glucuronate is bound by residues Asn216, Gly219, Lys222, and Arg223. 2 residues coordinate NAD(+): Tyr262 and Lys266. The active-site Proton acceptor is the Tyr262. Tyr276 is a UDP-alpha-D-glucuronate binding site. NAD(+) is bound by residues Thr292 and Arg303. The interval 380–401 is disordered; that stretch reads EFKPNTADDPHKRKPDISKAKE. Over residues 385–401 the composition is skewed to basic and acidic residues; the sequence is TADDPHKRKPDISKAKE.

Belongs to the NAD(P)-dependent epimerase/dehydratase family. UDP-glucuronic acid decarboxylase subfamily. NAD(+) is required as a cofactor. Ubiquitous.

Its subcellular location is the golgi apparatus. The protein localises to the golgi stack membrane. It catalyses the reaction UDP-alpha-D-glucuronate + H(+) = UDP-alpha-D-xylose + CO2. It functions in the pathway nucleotide-sugar biosynthesis; UDP-alpha-D-xylose biosynthesis; UDP-alpha-D-xylose from UDP-alpha-D-glucuronate: step 1/1. Its function is as follows. Catalyzes the NAD-dependent decarboxylation of UDP-glucuronic acid to UDP-xylose. Necessary for the biosynthesis of the core tetrasaccharide in glycosaminoglycan biosynthesis. The protein is UDP-glucuronic acid decarboxylase 1 of Arabidopsis thaliana (Mouse-ear cress).